The chain runs to 1251 residues: Phospholipid-transporting ATPase IC (1251 aa).

Residues 1-54 are disordered; that stretch reads MSTERDSETTFDEDSQPNDEVVPYSDDETEDELDDQGSAVEPEQNRVNREAEEN. Residues 1–108 lie on the Cytoplasmic side of the membrane; the sequence is MSTERDSETT…TYKYNAFTFI (108 aa). The span at 25–35 shows a compositional bias: acidic residues; sequence SDDETEDELDD. Positions 43-54 are enriched in basic and acidic residues; it reads EQNRVNREAEEN. A helical transmembrane segment spans residues 109–130; it reads PMNLFEQFKRAANLYFLALLIL. Topologically, residues 131-136 are exoplasmic loop; that stretch reads QAVPQI. A helical transmembrane segment spans residues 137 to 156; the sequence is STLAWYTTLVPLLVVLGVTA. Topologically, residues 157–340 are cytoplasmic; the sequence is IKDLVDDVAR…TKIDYLMNYM (184 aa). Residues 341–362 form a helical membrane-spanning segment; it reads VYTIFVVLILLSAGLAIGHAYW. At 363-389 the chain is on the exoplasmic loop side; the sequence is EAQVGNSSWYLYDGEDDTPSYRGFLIF. Residues 390–411 traverse the membrane as a helical segment; the sequence is WGYIIVLNTMVPISLYVSVEVI. Residues 412-949 are Cytoplasmic-facing; it reads RLGQSHFINW…GRWSYIRMCK (538 aa). Asp-454 serves as the catalytic 4-aspartylphosphate intermediate. ATP is bound by residues Asp-454, Lys-455, Thr-456, Glu-555, Phe-596, Lys-619, Arg-652, Thr-732, Gly-733, Asp-734, Arg-867, and Lys-873. Residue Asp-454 participates in Mg(2+) binding. Residue Thr-456 participates in Mg(2+) binding. Mg(2+) is bound at residue Asp-893. Residues Asn-896 and Asp-897 each coordinate ATP. Position 897 (Asp-897) interacts with Mg(2+). The chain crosses the membrane as a helical span at residues 950-970; the sequence is FLRYFFYKNFAFTLVHFWYSF. Residues 971-982 lie on the Exoplasmic loop side of the membrane; that stretch reads FNGYSAQTAYED. Residues 983 to 1002 traverse the membrane as a helical segment; it reads WFITLYNVLYTSLPVLLMGL. The Cytoplasmic segment spans residues 1003–1032; that stretch reads LDQDVSDKLSLRFPGLYIVGQRDLLFNYKR. A helical membrane pass occupies residues 1033 to 1054; that stretch reads FFVSLLHGVLTSMILFFIPLGA. Topologically, residues 1055-1068 are exoplasmic loop; sequence YLQTVGQDGEAPSD. A helical membrane pass occupies residues 1069–1091; that stretch reads YQSFAVTIASALVITVNFQIGLD. The Cytoplasmic segment spans residues 1092–1097; sequence TSYWTF. Residues 1098-1118 form a helical membrane-spanning segment; that stretch reads VNAFSIFGSIALYFGIMFDFH. At 1119–1138 the chain is on the exoplasmic loop side; that stretch reads SAGIHVLFPSAFQFTGTASN. A helical transmembrane segment spans residues 1139-1163; it reads ALRQPYIWLTIILAVAVCLLPVVAI. At 1164-1251 the chain is on the cytoplasmic side; that stretch reads RFLSMTIWPS…TAEYRRTGDS (88 aa). Position 1223 is a phosphoserine (Ser-1223).

This sequence belongs to the cation transport ATPase (P-type) (TC 3.A.3) family. Type IV subfamily. In terms of assembly, component of a P4-ATPase flippase complex which consists of a catalytic alpha subunit ATP8B1 and an accessory beta subunit TMEM30A. The flippase ATP8B1:TMEM30A complex can form an intermediate phosphoenzyme in vitro. Also interacts with beta subunit TMEM30B. Mg(2+) serves as cofactor. As to expression, found in most tissues except brain and skeletal muscle. Most abundant in pancreas and small intestine.

It is found in the cell membrane. The protein localises to the apical cell membrane. Its subcellular location is the cell projection. The protein resides in the stereocilium. It localises to the endoplasmic reticulum. It is found in the golgi apparatus. It catalyses the reaction ATP + H2O + phospholipidSide 1 = ADP + phosphate + phospholipidSide 2.. It carries out the reaction a 1,2-diacyl-sn-glycero-3-phosphocholine(out) + ATP + H2O = a 1,2-diacyl-sn-glycero-3-phosphocholine(in) + ADP + phosphate + H(+). The enzyme catalyses a 1,2-diacyl-sn-glycero-3-phospho-L-serine(out) + ATP + H2O = a 1,2-diacyl-sn-glycero-3-phospho-L-serine(in) + ADP + phosphate + H(+). Catalytic component of a P4-ATPase flippase complex which catalyzes the hydrolysis of ATP coupled to the transport of phospholipids, in particular phosphatidylcholines (PC), from the outer to the inner leaflet of the plasma membrane. May participate in the establishment of the canalicular membrane integrity by ensuring asymmetric distribution of phospholipids in the canicular membrane. Thus may have a role in the regulation of bile acids transport into the canaliculus, uptake of bile acids from intestinal contents into intestinal mucosa or both and protect hepatocytes from bile salts. Involved in the microvillus formation in polarized epithelial cells; the function seems to be independent from its flippase activity. Participates in correct apical membrane localization of CDC42, CFTR and SLC10A2. Enables CDC42 clustering at the apical membrane during enterocyte polarization through the interaction between CDC42 polybasic region and negatively charged membrane lipids provided by ATP8B1. Together with TMEM30A is involved in uptake of the synthetic drug alkylphospholipid perifosine. Required for the preservation of cochlear hair cells in the inner ear. May act as cardiolipin transporter during inflammatory injury. This chain is Phospholipid-transporting ATPase IC, found in Homo sapiens (Human).